The following is a 790-amino-acid chain: Phenylalanine--tRNA ligase beta subunit (790 aa).

Residues 40–149 enclose the tRNA-binding domain; sequence AEKVSGVVVG…IDAPVGTDIN (110 aa). Residues 402 to 479 enclose the B5 domain; sequence NKQIKINLSI…RIYGYSKLPE (78 aa). Mg(2+)-binding residues include aspartate 457, aspartate 463, glutamate 466, and glutamate 467. Positions 698 to 789 constitute an FDX-ACB domain; it reads SKYPSVSRDI…LKTKFNIEQR (92 aa).

The protein belongs to the phenylalanyl-tRNA synthetase beta subunit family. Type 1 subfamily. In terms of assembly, tetramer of two alpha and two beta subunits. Mg(2+) serves as cofactor.

The protein resides in the cytoplasm. The catalysed reaction is tRNA(Phe) + L-phenylalanine + ATP = L-phenylalanyl-tRNA(Phe) + AMP + diphosphate + H(+). The chain is Phenylalanine--tRNA ligase beta subunit from Francisella tularensis subsp. tularensis (strain SCHU S4 / Schu 4).